Consider the following 359-residue polypeptide: tRNA N6-adenosine threonylcarbamoyltransferase (359 aa).

2 residues coordinate Fe cation: His115 and His119. Substrate is bound by residues 137–141, Asp170, Gly183, and Asn283; that span reads LVSGG. Asp311 lines the Fe cation pocket. Positions 328–359 are disordered; it reads APDSLDIAPRSRWPLDEKSAPVFGTGRRGAKA.

It belongs to the KAE1 / TsaD family. The cofactor is Fe(2+).

Its subcellular location is the cytoplasm. The catalysed reaction is L-threonylcarbamoyladenylate + adenosine(37) in tRNA = N(6)-L-threonylcarbamoyladenosine(37) in tRNA + AMP + H(+). Its function is as follows. Required for the formation of a threonylcarbamoyl group on adenosine at position 37 (t(6)A37) in tRNAs that read codons beginning with adenine. Is involved in the transfer of the threonylcarbamoyl moiety of threonylcarbamoyl-AMP (TC-AMP) to the N6 group of A37, together with TsaE and TsaB. TsaD likely plays a direct catalytic role in this reaction. In Brucella melitensis biotype 2 (strain ATCC 23457), this protein is tRNA N6-adenosine threonylcarbamoyltransferase.